Here is a 135-residue protein sequence, read N- to C-terminus: Small ribosomal subunit protein bS16 (135 aa).

The tract at residues 82–135 is disordered; the sequence is RPAETVGKAKQAAKREADAKQAAKEAAEAKAAAADEKAAEAEASDSAESESTEG. Residues 94 to 121 show a composition bias toward basic and acidic residues; that stretch reads AKREADAKQAAKEAAEAKAAAADEKAAE. Over residues 123 to 135 the composition is skewed to acidic residues; sequence EASDSAESESTEG.

This sequence belongs to the bacterial ribosomal protein bS16 family.

The protein is Small ribosomal subunit protein bS16 of Synechococcus sp. (strain CC9605).